The primary structure comprises 339 residues: Dicamba O-demethylase, oxygenase component (339 aa).

In terms of domain architecture, Rieske spans W8 to I110. [2Fe-2S] cluster is bound by residues C48, H50, C67, and H70. Residues H159 and H164 each coordinate Fe cation. The 3,6-dichloro-2-methoxybenzoate site is built by N229, H250, and W284. D293 provides a ligand contact to Fe cation.

As to quaternary structure, homotrimer. The dicamba O-demethylase multicomponent enzyme system is composed of an oxygenase component (DdmC) and an electron transfer component formed by a ferredoxin reductase (DdmA) and a ferredoxin (DdmB). In vitro, dicamba O-demethylase assays in which DdmA2 is substituted for DdmA1 demonstrate that the two enzymes possess nearly identical activities. It depends on [2Fe-2S] cluster as a cofactor.

It carries out the reaction 3,6-dichloro-2-methoxybenzoate + 2 reduced [2Fe-2S]-[ferredoxin] + O2 + 2 H(+) = 3,6-dichlorosalicylate + formaldehyde + 2 oxidized [2Fe-2S]-[ferredoxin] + H2O. Activity enhanced by Fe(2+) and Mg(2+) ions. Its function is as follows. Component of the dicamba O-demethylase multicomponent enzyme system involved in the degradation of the herbicide dicamba. In vitro, catalyzes the O-demethylation of 2-methoxy-3,6-dichlorobenzoic acid (dicamba) to yield 3,6-dichlorosalicylic acid (DCSA) via an exocyclic monooxygenation. This Stenotrophomonas maltophilia (Pseudomonas maltophilia) protein is Dicamba O-demethylase, oxygenase component.